Reading from the N-terminus, the 204-residue chain is Recombination protein RecR (204 aa).

The C4-type zinc-finger motif lies at 58–75 (CSICQNITDLGTDPCLLC). In terms of domain architecture, Toprim spans 83–181 (SVICVVESPT…NVTRIARGIP (99 aa)).

It belongs to the RecR family.

Functionally, may play a role in DNA repair. It seems to be involved in an RecBC-independent recombinational process of DNA repair. It may act with RecF and RecO. This Chlorobaculum parvum (strain DSM 263 / NCIMB 8327) (Chlorobium vibrioforme subsp. thiosulfatophilum) protein is Recombination protein RecR.